A 241-amino-acid chain; its full sequence is Tetrahydromethanopterin S-methyltransferase subunit A (241 aa).

At 1 to 220 the chain is on the cytoplasmic side; the sequence is MAEKKEPAEG…HSGVLAGKIE (220 aa). His85 contacts 5-hydroxybenzimidazolylcob(I)amide. A helical membrane pass occupies residues 221–241; the sequence is GIMVGLVLSLFVLGLLLFGGM.

It belongs to the MtrA family. The complex is composed of 8 subunits; MtrA, MtrB, MtrC, MtrD, MtrE, MtrF, MtrG and MtrH. 5-hydroxybenzimidazolylcob(I)amide is required as a cofactor.

The protein resides in the cell membrane. It catalyses the reaction 5-methyl-5,6,7,8-tetrahydromethanopterin + coenzyme M + 2 Na(+)(in) = 5,6,7,8-tetrahydromethanopterin + methyl-coenzyme M + 2 Na(+)(out). It functions in the pathway one-carbon metabolism; methanogenesis from CO(2); methyl-coenzyme M from 5,10-methylene-5,6,7,8-tetrahydromethanopterin: step 2/2. In terms of biological role, part of a complex that catalyzes the formation of methyl-coenzyme M and tetrahydromethanopterin from coenzyme M and methyl-tetrahydromethanopterin. This is an energy-conserving, sodium-ion translocating step. In Methanohalobium evestigatum (strain ATCC BAA-1072 / DSM 3721 / NBRC 107634 / OCM 161 / Z-7303), this protein is Tetrahydromethanopterin S-methyltransferase subunit A.